The sequence spans 316 residues: MDKKPPLTLYLAAPRGFCAGVDRAIKIVEMALQKWGAPVYVRHEIVHNKFVVDSLRDKGAVFVEELDDVPSDRPVIFSAHGVPKAVPAEARRREMVFVDATCPLVSKVHVEAERHHAEGLQMVMIGHAGHPEVLGTMGQLPEGEVLLVETVEDVARIEPRDPGRLAFITQTTLSVDDTAAIVAALQARFPGIRGPAKEDICYATTNRQASVKAIAGRIDALLVIGAPNSSNSRRLVEVGSAAGCAYSQLVMRADQIDWRAIAGARAVGVTAGASAPEVLVDEVVAAFHARYDLTVEMVETARENVEFKVPRVLREA.

Cysteine 18 is a binding site for [4Fe-4S] cluster. (2E)-4-hydroxy-3-methylbut-2-enyl diphosphate is bound by residues histidine 47 and histidine 80. Histidine 47 and histidine 80 together coordinate dimethylallyl diphosphate. Histidine 47 and histidine 80 together coordinate isopentenyl diphosphate. Cysteine 102 is a [4Fe-4S] cluster binding site. A (2E)-4-hydroxy-3-methylbut-2-enyl diphosphate-binding site is contributed by histidine 130. A dimethylallyl diphosphate-binding site is contributed by histidine 130. Histidine 130 lines the isopentenyl diphosphate pocket. Residue glutamate 132 is the Proton donor of the active site. Position 171 (threonine 171) interacts with (2E)-4-hydroxy-3-methylbut-2-enyl diphosphate. Cysteine 201 provides a ligand contact to [4Fe-4S] cluster. Residues serine 229, serine 230, asparagine 231, and serine 274 each contribute to the (2E)-4-hydroxy-3-methylbut-2-enyl diphosphate site. Dimethylallyl diphosphate contacts are provided by serine 229, serine 230, asparagine 231, and serine 274. Isopentenyl diphosphate is bound by residues serine 229, serine 230, asparagine 231, and serine 274.

It belongs to the IspH family. The cofactor is [4Fe-4S] cluster.

It carries out the reaction isopentenyl diphosphate + 2 oxidized [2Fe-2S]-[ferredoxin] + H2O = (2E)-4-hydroxy-3-methylbut-2-enyl diphosphate + 2 reduced [2Fe-2S]-[ferredoxin] + 2 H(+). The enzyme catalyses dimethylallyl diphosphate + 2 oxidized [2Fe-2S]-[ferredoxin] + H2O = (2E)-4-hydroxy-3-methylbut-2-enyl diphosphate + 2 reduced [2Fe-2S]-[ferredoxin] + 2 H(+). Its pathway is isoprenoid biosynthesis; dimethylallyl diphosphate biosynthesis; dimethylallyl diphosphate from (2E)-4-hydroxy-3-methylbutenyl diphosphate: step 1/1. It functions in the pathway isoprenoid biosynthesis; isopentenyl diphosphate biosynthesis via DXP pathway; isopentenyl diphosphate from 1-deoxy-D-xylulose 5-phosphate: step 6/6. Catalyzes the conversion of 1-hydroxy-2-methyl-2-(E)-butenyl 4-diphosphate (HMBPP) into a mixture of isopentenyl diphosphate (IPP) and dimethylallyl diphosphate (DMAPP). Acts in the terminal step of the DOXP/MEP pathway for isoprenoid precursor biosynthesis. The protein is 4-hydroxy-3-methylbut-2-enyl diphosphate reductase of Paracoccus denitrificans (strain Pd 1222).